A 165-amino-acid polypeptide reads, in one-letter code: Aspartate carbamoyltransferase regulatory chain (165 aa).

Zn(2+)-binding residues include cysteine 121, cysteine 126, cysteine 149, and cysteine 152.

This sequence belongs to the PyrI family. Contains catalytic and regulatory chains. Zn(2+) is required as a cofactor.

In terms of biological role, involved in allosteric regulation of aspartate carbamoyltransferase. In Methanoregula boonei (strain DSM 21154 / JCM 14090 / 6A8), this protein is Aspartate carbamoyltransferase regulatory chain.